Here is a 182-residue protein sequence, read N- to C-terminus: Keratin, high-sulfur matrix protein, B2D (182 aa).

Tandem repeats lie at residues 27–36 (PTCCQTSCCQ), 37–46 (PTSIQTSCCQ), 47–56 (PTSIQTSCCQ), 57–66 (PTSIQTSCCQ), 67–76 (PISIQTSCCQ), and 77–86 (PTCLQTSGCE). Positions 27–86 (PTCCQTSCCQPTSIQTSCCQPTSIQTSCCQPTSIQTSCCQPISIQTSCCQPTCLQTSGCE) are 6 X 10 AA tandem repeats.

Functionally, the keratin products of mammalian epidermal derivatives such as wool and hair consist of microfibrils embedded in a rigid matrix of other proteins. The matrix proteins include the high-sulfur and high-tyrosine keratins, having molecular weights of 6-20 kDa, whereas the microfibrils contain the larger, low-sulfur keratins (40-56 kDa). The chain is Keratin, high-sulfur matrix protein, B2D from Ovis aries (Sheep).